Reading from the N-terminus, the 361-residue chain is Beta-hexosaminidase (361 aa).

Substrate-binding positions include D69, R77, R144, and 174–175 (KH). H187 functions as the Proton donor/acceptor in the catalytic mechanism. D258 functions as the Nucleophile in the catalytic mechanism.

The protein belongs to the glycosyl hydrolase 3 family. NagZ subfamily.

The protein resides in the cytoplasm. The enzyme catalyses Hydrolysis of terminal non-reducing N-acetyl-D-hexosamine residues in N-acetyl-beta-D-hexosaminides.. The protein operates within cell wall biogenesis; peptidoglycan recycling. Its function is as follows. Plays a role in peptidoglycan recycling by cleaving the terminal beta-1,4-linked N-acetylglucosamine (GlcNAc) from peptide-linked peptidoglycan fragments, giving rise to free GlcNAc, anhydro-N-acetylmuramic acid and anhydro-N-acetylmuramic acid-linked peptides. This is Beta-hexosaminidase from Neisseria meningitidis serogroup C / serotype 2a (strain ATCC 700532 / DSM 15464 / FAM18).